Reading from the N-terminus, the 458-residue chain is UDP-N-acetylmuramate--L-alanine ligase (458 aa).

ATP is bound at residue Gly-115 to Thr-121.

The protein belongs to the MurCDEF family.

The protein resides in the cytoplasm. It carries out the reaction UDP-N-acetyl-alpha-D-muramate + L-alanine + ATP = UDP-N-acetyl-alpha-D-muramoyl-L-alanine + ADP + phosphate + H(+). It functions in the pathway cell wall biogenesis; peptidoglycan biosynthesis. In terms of biological role, cell wall formation. This Anaeromyxobacter sp. (strain Fw109-5) protein is UDP-N-acetylmuramate--L-alanine ligase.